The chain runs to 750 residues: Photosystem I P700 chlorophyll a apoprotein A1 (750 aa).

Transmembrane regions (helical) follow at residues 70-93 (VFSA…FHGA), 156-179 (LYCT…FHYH), 195-219 (LNHH…HVSL), 291-309 (IAHH…GHMY), 346-369 (WHAQ…HHMY), 385-411 (LSLF…IFMV), 433-455 (AIIS…LYIH), and 531-549 (FLVH…LILL). Residues cysteine 573 and cysteine 582 each contribute to the [4Fe-4S] cluster site. Helical transmembrane passes span 589–610 (HVFL…HFSW) and 664–686 (LSAY…MFLF). Position 675 (histidine 675) interacts with chlorophyll a'. Chlorophyll a contacts are provided by methionine 683 and tyrosine 691. Tryptophan 692 is a phylloquinone binding site. The chain crosses the membrane as a helical span at residues 724-744 (AVGVTHYLLGGIATTWAFFLA).

Belongs to the PsaA/PsaB family. As to quaternary structure, the PsaA/B heterodimer binds the P700 chlorophyll special pair and subsequent electron acceptors. PSI consists of a core antenna complex that captures photons, and an electron transfer chain that converts photonic excitation into a charge separation. The eukaryotic PSI reaction center is composed of at least 11 subunits. The cofactor is P700 is a chlorophyll a/chlorophyll a' dimer, A0 is one or more chlorophyll a, A1 is one or both phylloquinones and FX is a shared 4Fe-4S iron-sulfur center..

The protein localises to the plastid. It localises to the chloroplast thylakoid membrane. The catalysed reaction is reduced [plastocyanin] + hnu + oxidized [2Fe-2S]-[ferredoxin] = oxidized [plastocyanin] + reduced [2Fe-2S]-[ferredoxin]. In terms of biological role, psaA and PsaB bind P700, the primary electron donor of photosystem I (PSI), as well as the electron acceptors A0, A1 and FX. PSI is a plastocyanin-ferredoxin oxidoreductase, converting photonic excitation into a charge separation, which transfers an electron from the donor P700 chlorophyll pair to the spectroscopically characterized acceptors A0, A1, FX, FA and FB in turn. Oxidized P700 is reduced on the lumenal side of the thylakoid membrane by plastocyanin. This chain is Photosystem I P700 chlorophyll a apoprotein A1, found in Cucumis sativus (Cucumber).